A 166-amino-acid chain; its full sequence is Large ribosomal subunit protein uL10 (166 aa).

The protein belongs to the universal ribosomal protein uL10 family. In terms of assembly, part of the ribosomal stalk of the 50S ribosomal subunit. The N-terminus interacts with L11 and the large rRNA to form the base of the stalk. The C-terminus forms an elongated spine to which L12 dimers bind in a sequential fashion forming a multimeric L10(L12)X complex.

Functionally, forms part of the ribosomal stalk, playing a central role in the interaction of the ribosome with GTP-bound translation factors. The protein is Large ribosomal subunit protein uL10 of Aeromonas salmonicida (strain A449).